A 1440-amino-acid chain; its full sequence is Actin cytoskeleton-regulatory complex protein PAN1 (1440 aa).

Residues 1–21 (MYNPYQQPSYGAPQQPQQTGY) are compositionally biased toward polar residues. The interval 1–67 (MYNPYQQPSY…TGFQPQATGY (67 aa)) is disordered. The span at 39-63 (TGYYQQQPTYQQPGFQPQQTGFQPQ) shows a compositional bias: low complexity. An EH 1 domain is found at 117–206 (DQSKFEHLFR…EKWSNEVQSF (90 aa)). An EF-hand 1 domain is found at 150–185 (LPPVTLAEIWSLSDTNKSGSLLFPEFALSLHLCNLA). Disordered stretches follow at residues 234–285 (EKTS…PLQP) and 297–428 (QRQN…KPGQ). Polar residues-rich tracts occupy residues 245 to 257 (PSTS…TGFQ) and 297 to 384 (QRQN…YQPL). Residues 385–398 (QSQGTGFQSQGTIQ) are compositionally biased toward low complexity. The segment covering 399–423 (PQGTGFQPQSTGFQPQPTGLSSQPT) has biased composition (polar residues). The EH 2 domain maps to 480 to 569 (EKSIYDGIFQ…PELIPPSKKH (90 aa)). The region spanning 513 to 548 (LARPDLETIWNLADGDNKGKLNKDEFSVAMHLVYRR) is the EF-hand 2 domain. Disordered regions lie at residues 564-629 (PPSK…GTMS) and 861-1440 (RSLP…RVVD). Residues 573–583 (SMDSLKNSLRG) show a composition bias toward polar residues. The stretch at 627–686 (TMSIEQLKKEIREKKILLDAMDSEDRDSSVLSQRDREWNEREIESLKFRILQAHNKLESS) forms a coiled coil. A compositionally biased stretch (basic and acidic residues) spans 867-876 (EGSKNGRNEK). Over residues 882–914 (TQPTKSQSQSAQSTQSQSQSTQSVQTQPAQPAT) the composition is skewed to low complexity. The span at 921 to 984 (PEDRAAYIKA…KETETQRETN (64 aa)) shows a compositional bias: basic and acidic residues. Polar residues predominate over residues 985-994 (TKSTSQTSKA). A compositionally biased stretch (acidic residues) spans 1023–1032 (PEDDSEDEEY). A coiled-coil region spans residues 1024 to 1076 (EDDSEDEEYAALMKQKQEMEERRLRKKKEKEERLARLKREMEEMNKEEDSDEE). Residues 1038–1067 (QKQEMEERRLRKKKEKEERLARLKREMEEM) show a composition bias toward basic and acidic residues. Residues 1068–1077 (NKEEDSDEEP) show a composition bias toward acidic residues. Over residues 1080-1100 (SVPTYTNGSVKSSTQPISQSE) the composition is skewed to polar residues. A compositionally biased stretch (basic and acidic residues) spans 1101-1112 (EVPKTEEEKSGE). The segment covering 1140–1155 (SKANPFSKNNNPFFKP) has biased composition (low complexity). A compositionally biased stretch (acidic residues) spans 1180 to 1192 (DWSDSDDNSSDDD). Basic and acidic residues predominate over residues 1218-1230 (TIEKEETGSKETA). 4 stretches are compositionally biased toward pro residues: residues 1232-1255 (VPPP…PPPI), 1311-1324 (DVPP…PPPQ), 1333-1353 (APPP…PPSL), and 1362-1402 (PPAP…PPGG). A WH2 domain is found at 1405–1422 (NIGALLGQITGGKSLKKV). A compositionally biased stretch (basic and acidic residues) spans 1420–1430 (KKVDDSQKRIA).

The protein belongs to the PAN1 family. As to quaternary structure, component of the PAN1 actin cytoskeleton-regulatory complex.

It localises to the cell membrane. Its subcellular location is the endosome membrane. The protein localises to the cytoplasm. The protein resides in the cytoskeleton. It is found in the actin patch. Component of the PAN1 actin cytoskeleton-regulatory complex required for the internalization of endosomes during actin-coupled endocytosis. The complex links the site of endocytosis to the cell membrane-associated actin cytoskeleton. Mediates uptake of external molecules and vacuolar degradation of plasma membrane proteins. Plays a role in the proper organization of the cell membrane-associated actin cytoskeleton and promotes its destabilization. This is Actin cytoskeleton-regulatory complex protein PAN1 (PAN1) from Meyerozyma guilliermondii (strain ATCC 6260 / CBS 566 / DSM 6381 / JCM 1539 / NBRC 10279 / NRRL Y-324) (Yeast).